The chain runs to 193 residues: Non-specific lipid transfer protein GPI-anchored 2 (193 aa).

An N-terminal signal peptide occupies residues 1–22 (MSNVVVIAVVLIVASLTGHVSA). 4 disulfide bridges follow: cysteine 38–cysteine 83, cysteine 48–cysteine 67, cysteine 68–cysteine 110, and cysteine 81–cysteine 120. N-linked (GlcNAc...) asparagine glycosylation occurs at asparagine 44. Positions 143–164 (APGSMSGAESPGGFGSGPSASR) are disordered. The GPI-anchor amidated glycine moiety is linked to residue glycine 165. Residues 166–193 (SDAPSSAPYSLFLNLIIFPLAFAFYIFC) constitute a propeptide, removed in mature form.

It belongs to the plant LTP family. O-glycosylated on hydroxyprolines; noncontiguous hydroxylproline residues are glycosylated with arabinogalactan. Up-regulated in the epidermis of top stems. Expressed in roots, cotyledons, seedlings, leaves, stems, buds, flower and silique walls. Preferentially expressed in the shoot apical meristem and the root meristem. Also detected in expanding leaves and petals, developing flowers, and elongating pistils, stamens and siliques.

The protein localises to the cell membrane. Functionally, lipid transfer protein that, together with LTPG1, binds to lipids and functions as a component of the cuticular lipid export machinery that performs extensive export of intracellular lipids (e.g. C29 alkane) from epidermal cells to the surface to build the cuticular wax layer and silique walls. Contributes to pre-invasive defense against some non-host powdery mildew pathogens by preventing the penetration of the epidermal cell wall by the fungal agents (e.g. Blumeria graminis f. sp. hordei (Bgh)). Involved in seed and ovule maturation and development, probably by regulating the fatty acids homeostasis during suberin and sporopollenin biosynthesis or deposition. The sequence is that of Non-specific lipid transfer protein GPI-anchored 2 from Arabidopsis thaliana (Mouse-ear cress).